The chain runs to 317 residues: 4-hydroxy-3-methylbut-2-enyl diphosphate reductase (317 aa).

C12 contacts [4Fe-4S] cluster. (2E)-4-hydroxy-3-methylbut-2-enyl diphosphate contacts are provided by H41 and H74. H41 and H74 together coordinate dimethylallyl diphosphate. 2 residues coordinate isopentenyl diphosphate: H41 and H74. C97 is a binding site for [4Fe-4S] cluster. H125 contributes to the (2E)-4-hydroxy-3-methylbut-2-enyl diphosphate binding site. H125 is a binding site for dimethylallyl diphosphate. An isopentenyl diphosphate-binding site is contributed by H125. E127 acts as the Proton donor in catalysis. T168 provides a ligand contact to (2E)-4-hydroxy-3-methylbut-2-enyl diphosphate. Position 198 (C198) interacts with [4Fe-4S] cluster. Residues S226, S227, N228, and S270 each coordinate (2E)-4-hydroxy-3-methylbut-2-enyl diphosphate. 4 residues coordinate dimethylallyl diphosphate: S226, S227, N228, and S270. The isopentenyl diphosphate site is built by S226, S227, N228, and S270.

The protein belongs to the IspH family. Homodimer. It depends on [4Fe-4S] cluster as a cofactor.

It catalyses the reaction isopentenyl diphosphate + 2 oxidized [2Fe-2S]-[ferredoxin] + H2O = (2E)-4-hydroxy-3-methylbut-2-enyl diphosphate + 2 reduced [2Fe-2S]-[ferredoxin] + 2 H(+). The enzyme catalyses dimethylallyl diphosphate + 2 oxidized [2Fe-2S]-[ferredoxin] + H2O = (2E)-4-hydroxy-3-methylbut-2-enyl diphosphate + 2 reduced [2Fe-2S]-[ferredoxin] + 2 H(+). It functions in the pathway isoprenoid biosynthesis; dimethylallyl diphosphate biosynthesis; dimethylallyl diphosphate from (2E)-4-hydroxy-3-methylbutenyl diphosphate: step 1/1. It participates in isoprenoid biosynthesis; isopentenyl diphosphate biosynthesis via DXP pathway; isopentenyl diphosphate from 1-deoxy-D-xylulose 5-phosphate: step 6/6. In terms of biological role, catalyzes the conversion of 1-hydroxy-2-methyl-2-(E)-butenyl 4-diphosphate (HMBPP) into a mixture of isopentenyl diphosphate (IPP) and dimethylallyl diphosphate (DMAPP). Acts in the terminal step of the DOXP/MEP pathway for isoprenoid precursor biosynthesis. This is 4-hydroxy-3-methylbut-2-enyl diphosphate reductase from Edwardsiella ictaluri (strain 93-146).